The sequence spans 346 residues: Elongation factor Ts (346 aa).

The interval T80–V83 is involved in Mg(2+) ion dislocation from EF-Tu.

It belongs to the EF-Ts family.

It is found in the cytoplasm. Functionally, associates with the EF-Tu.GDP complex and induces the exchange of GDP to GTP. It remains bound to the aminoacyl-tRNA.EF-Tu.GTP complex up to the GTP hydrolysis stage on the ribosome. This Streptococcus uberis (strain ATCC BAA-854 / 0140J) protein is Elongation factor Ts.